A 700-amino-acid chain; its full sequence is Chaperonin CPN60, mitochondrial (700 aa).

The transit peptide at 1–9 (MRMKRIHIL) directs the protein to the mitochondrion. A disordered region spans residues 636 to 700 (TYKHKLHDDE…SMNDEYNYDE (65 aa)). The segment covering 644-700 (DEDTDEDDEEDEDDEDDEDDLDDDDYDDEDEEDEEDEEDEDDEDDEDSMNDEYNYDE) has biased composition (acidic residues).

This sequence belongs to the chaperonin (HSP60) family.

The protein resides in the mitochondrion matrix. Implicated in mitochondrial protein import and macromolecular assembly. May facilitate the correct folding of imported proteins. May also prevent misfolding and promote the refolding and proper assembly of unfolded polypeptides generated under stress conditions in the mitochondrial matrix. The chain is Chaperonin CPN60, mitochondrial from Plasmodium falciparum (isolate FCR-3 / Gambia).